We begin with the raw amino-acid sequence, 211 residues long: NADH-quinone oxidoreductase subunit I (211 aa).

The interval 21 to 41 is disordered; it reads PTTEQYPEQKKETAPRFHGRH. 4Fe-4S ferredoxin-type domains follow at residues 43–73 and 89–118; these read LNRHPDGLEKCVGCELCAWACPADAIYVEGA and RVYQINYLRCILCGLCIEACPTRALTMSND. Cysteine 53, cysteine 56, cysteine 59, cysteine 63, cysteine 98, cysteine 101, cysteine 104, and cysteine 108 together coordinate [4Fe-4S] cluster. The interval 141 to 211 is disordered; the sequence is RAGMESPPHP…AHGAGSERPR (71 aa). The segment covering 152 to 166 has biased composition (basic and acidic residues); that stretch reads RLGESETDYYTRDPD. The span at 179–191 shows a compositional bias: acidic residues; the sequence is DEADEAGEAGEAG. Residues 192–211 are compositionally biased toward basic and acidic residues; the sequence is EAERAADKVPAHGAGSERPR.

Belongs to the complex I 23 kDa subunit family. In terms of assembly, NDH-1 is composed of 14 different subunits. Subunits NuoA, H, J, K, L, M, N constitute the membrane sector of the complex. It depends on [4Fe-4S] cluster as a cofactor.

The protein resides in the cell membrane. It carries out the reaction a quinone + NADH + 5 H(+)(in) = a quinol + NAD(+) + 4 H(+)(out). In terms of biological role, NDH-1 shuttles electrons from NADH, via FMN and iron-sulfur (Fe-S) centers, to quinones in the respiratory chain. The immediate electron acceptor for the enzyme in this species is believed to be ubiquinone. Couples the redox reaction to proton translocation (for every two electrons transferred, four hydrogen ions are translocated across the cytoplasmic membrane), and thus conserves the redox energy in a proton gradient. This chain is NADH-quinone oxidoreductase subunit I, found in Parafrankia sp. (strain EAN1pec).